The following is a 119-amino-acid chain: Large ribosomal subunit protein uL22 (119 aa).

The protein belongs to the universal ribosomal protein uL22 family. Part of the 50S ribosomal subunit.

This protein binds specifically to 23S rRNA; its binding is stimulated by other ribosomal proteins, e.g. L4, L17, and L20. It is important during the early stages of 50S assembly. It makes multiple contacts with different domains of the 23S rRNA in the assembled 50S subunit and ribosome. In terms of biological role, the globular domain of the protein is located near the polypeptide exit tunnel on the outside of the subunit, while an extended beta-hairpin is found that lines the wall of the exit tunnel in the center of the 70S ribosome. In Chlorobium luteolum (strain DSM 273 / BCRC 81028 / 2530) (Pelodictyon luteolum), this protein is Large ribosomal subunit protein uL22.